Here is a 188-residue protein sequence, read N- to C-terminus: dCTP deaminase (188 aa).

DCTP is bound by residues 111–116, 135–137, Gln156, Tyr170, and Gln180; these read KSTYAR and TLE. The active-site Proton donor/acceptor is the Glu137.

Belongs to the dCTP deaminase family. Homotrimer.

It carries out the reaction dCTP + H2O + H(+) = dUTP + NH4(+). It participates in pyrimidine metabolism; dUMP biosynthesis; dUMP from dCTP (dUTP route): step 1/2. Its function is as follows. Catalyzes the deamination of dCTP to dUTP. The sequence is that of dCTP deaminase from Chromohalobacter salexigens (strain ATCC BAA-138 / DSM 3043 / CIP 106854 / NCIMB 13768 / 1H11).